We begin with the raw amino-acid sequence, 204 residues long: MGAYKYMQELWRKKQSDVMRFLLRVRCWQYRQLSSLHRTPKPTRPDKARRLGYKAKQGYVIYRIRVRRGGRKRPVPKGATYGKPVHHGVNQIKFARSLQSTAEERAGRHCGGLRVLSSYWVGEDSTYKFFEVILVDIFHKAIRRNPDTQWITKAVHKHREMRGLTSAGKKSRGLGKGHKFHLTIGGSRRAAWRRRNTLQLHRYR.

It belongs to the eukaryotic ribosomal protein eL15 family. As to quaternary structure, component of the large ribosomal subunit.

Its subcellular location is the cytoplasm. Component of the large ribosomal subunit. The ribosome is a large ribonucleoprotein complex responsible for the synthesis of proteins in the cell. The protein is Large ribosomal subunit protein eL15 (rpl15) of Paramisgurnus dabryanus.